The chain runs to 2892 residues: E3 ubiquitin-protein ligase lubel (2892 aa).

8 disordered regions span residues 23-55 (DRIG…KSTP), 125-252 (KQHM…QLEK), 395-423 (SQQH…QFGS), 483-631 (PSAA…ESEG), 644-672 (QKLQ…ENTQ), 685-737 (AHEE…PDHE), 757-865 (CCKT…DNSL), and 949-975 (DRFT…QQES). Low complexity predominate over residues 40-52 (GLPKAPALPPKAK). Gly residues predominate over residues 189–198 (GWRGSLGGGA). Positions 206 to 215 (ATSSANQMNN) are enriched in polar residues. Low complexity-rich tracts occupy residues 402-412 (AQHPHQALPQH) and 483-503 (PSAA…TPSR). The segment covering 516–528 (VDDELTDDEDSDQ) has biased composition (acidic residues). Residues 535–546 (VSNRSGMTSASR) show a composition bias toward polar residues. Over residues 547–560 (SQHHQNHIQPRQRR) the composition is skewed to basic residues. The segment covering 606–623 (GTLTRNKTATDSARTSRI) has biased composition (polar residues). Residues 647–670 (QEADQHKSSKKAEPKRKPEMKDEN) are compositionally biased toward basic and acidic residues. Residues 801–813 (KPTTKSQQPSQKS) are compositionally biased toward polar residues. Low complexity-rich tracts occupy residues 818–837 (SKTT…AVNS) and 846–856 (KTPSKSTLKTS). In terms of domain architecture, UBA-like 1 spans 1042-1187 (MHIILKELEL…LMRIWGSPNG (146 aa)). 7 disordered regions span residues 1214 to 1252 (LQPP…SPYQ), 1477 to 1520 (LPTA…KLET), 1557 to 1653 (AEVQ…KILS), 1717 to 2019 (STTI…NLSE), 2032 to 2082 (RDEI…EGNT), 2191 to 2316 (SAPP…PLRS), and 2411 to 2431 (DYET…EPQK). Polar residues predominate over residues 1241–1252 (VKSTYATPSPYQ). The segment covering 1510 to 1519 (EELRQQEKLE) has biased composition (basic and acidic residues). A compositionally biased stretch (polar residues) spans 1560–1571 (QVQSDDQPSTSR). A compositionally biased stretch (basic residues) spans 1576-1587 (RAKRSQQSRKGR). A compositionally biased stretch (polar residues) spans 1595–1607 (PTNRTKLPNNIDQ). A compositionally biased stretch (basic and acidic residues) spans 1608-1627 (KVNESKTAAKETEAVKDKDL). 3 stretches are compositionally biased toward polar residues: residues 1630–1653 (AASN…KILS), 1717–1726 (STTISEQSEG), and 1764–1779 (KSPT…TSHI). Residues 1822–1834 (LSSSSLRSESRSS) are compositionally biased toward low complexity. Residues 1859–1881 (TVSSPKSEQLSDNQEVNLVSQET) show a composition bias toward polar residues. Over residues 1918–1927 (DSDEVFEDAP) the composition is skewed to acidic residues. Residues 1953–1963 (DGQRAETKSPE) show a composition bias toward basic and acidic residues. Composition is skewed to acidic residues over residues 1964–1975 (DEVVILLDEESQ) and 2036–2079 (SMDE…DGEE). Low complexity-rich tracts occupy residues 2214-2230 (PSEV…ALPI) and 2269-2291 (SGTA…TVSK). Residues 2297–2308 (NEPTNKSNSTPL) show a composition bias toward polar residues. A compositionally biased stretch (acidic residues) spans 2411-2425 (DYETSATEEEQEEPN). One can recognise a UBA-like 2 domain in the interval 2457-2513 (DPAILARKYVDQELVTNIAEAQIAATLVSMKFSEDVALWAARECSDLDQAIAMLQQE). Residues 2510–2748 (LQQECELCMN…LGLHAHHPRN (239 aa)) form a TRIAD supradomain region. Zn(2+) contacts are provided by Cys2514, Cys2517, Cys2537, Cys2540, Cys2618, Cys2621, Cys2636, Cys2639, Cys2644, Cys2647, His2655, Cys2660, Cys2690, and Cys2693. The segment at 2514 to 2564 (CELCMNSYPMNQMVSMLKCLHKCCKQCAKSYFTVQITDRSINDCSCPFCKL) adopts an RING-type 1 zinc-finger fold. The interval 2514-2892 (CELCMNSYPM…IKKHIPLKSA (379 aa)) is necessary for linear polyubiquitination and sufficent for inducing DptA in the intestine. Residues 2601–2660 (QRKLRDRSLLQDPNFKWCIQCSSGFFARPKQKRLICPDCGSVTCAQCRKPWERQHEGSSC) form an IBR-type zinc finger. The RING-type 2; atypical zinc finger occupies 2690–2720 (CPKCKFRYSLARGGCMHFTCTQCKFEFCYGC). Cys2704 is an active-site residue. Residues Cys2709 and Cys2712 each contribute to the Zn(2+) site.

This sequence belongs to the RBR family.

The catalysed reaction is [E2 ubiquitin-conjugating enzyme]-S-ubiquitinyl-L-cysteine + [acceptor protein]-L-lysine = [E2 ubiquitin-conjugating enzyme]-L-cysteine + [acceptor protein]-N(6)-ubiquitinyl-L-lysine.. Its function is as follows. E3 ubiquitin-protein ligase which conjugates linear 'Met-1'- and 'Lys-63'-linked polyubiquitin chains to substrates and plays a crucial role in the NF-kappa-B intestinal inflammatory response to oral infection and in the heat stress response. Preferentially interacts with 'Lys-63'-linked, and to a lesser extent 'Lys-48'-linked, polyubiquitin chains. Upon oral infection with a Gram-negative bacterium E.carotovora subsp. carotovora 15, functions with the E2 ubiquitin-conjugating enzyme Ubc10 to mediate the conjugation of 'Lys-63'- and linear 'Met-1'-linked polyubiquitin chains to the substrate key which is essential for activation of the NF-kappa-B signaling cascade in the adult intestinal epithelium. It is not required for systemic immune response to septic infection with either E.carotovora subsp. carotovora 15 or Gram-positive M.luteus bacteria. Function in controlling linear ubiquitination is also essential for regulating the heat stress response in adults. This function may require the E2 ubiquitin-conjugating enzymes Ubc10 or eff. This Drosophila melanogaster (Fruit fly) protein is E3 ubiquitin-protein ligase lubel.